We begin with the raw amino-acid sequence, 309 residues long: Protein FdhE (309 aa).

This sequence belongs to the FdhE family.

It localises to the cytoplasm. Its function is as follows. Necessary for formate dehydrogenase activity. This is Protein FdhE from Escherichia coli (strain SMS-3-5 / SECEC).